The primary structure comprises 493 residues: Aspartyl/glutamyl-tRNA(Asn/Gln) amidotransferase subunit B (493 aa).

A disordered region spans residues 268-291; sequence HYQEADGSTSKGRPKETAEDYRYF. A compositionally biased stretch (basic and acidic residues) spans 280–291; that stretch reads RPKETAEDYRYF.

The protein belongs to the GatB/GatE family. GatB subfamily. As to quaternary structure, heterotrimer of A, B and C subunits.

The catalysed reaction is L-glutamyl-tRNA(Gln) + L-glutamine + ATP + H2O = L-glutaminyl-tRNA(Gln) + L-glutamate + ADP + phosphate + H(+). It carries out the reaction L-aspartyl-tRNA(Asn) + L-glutamine + ATP + H2O = L-asparaginyl-tRNA(Asn) + L-glutamate + ADP + phosphate + 2 H(+). Allows the formation of correctly charged Asn-tRNA(Asn) or Gln-tRNA(Gln) through the transamidation of misacylated Asp-tRNA(Asn) or Glu-tRNA(Gln) in organisms which lack either or both of asparaginyl-tRNA or glutaminyl-tRNA synthetases. The reaction takes place in the presence of glutamine and ATP through an activated phospho-Asp-tRNA(Asn) or phospho-Glu-tRNA(Gln). In Corynebacterium glutamicum (strain ATCC 13032 / DSM 20300 / JCM 1318 / BCRC 11384 / CCUG 27702 / LMG 3730 / NBRC 12168 / NCIMB 10025 / NRRL B-2784 / 534), this protein is Aspartyl/glutamyl-tRNA(Asn/Gln) amidotransferase subunit B.